Consider the following 414-residue polypeptide: 26S proteasome regulatory subunit 8 homolog (414 aa).

197–204 (GPPGTGKT) is an ATP binding site.

This sequence belongs to the AAA ATPase family.

Its subcellular location is the cytoplasm. It localises to the nucleus. Its function is as follows. The 26S proteasome is involved in the ATP-dependent degradation of ubiquitinated proteins. The regulatory (or ATPase) complex confers ATP dependency and substrate specificity to the 26S complex. This Naegleria fowleri (Brain eating amoeba) protein is 26S proteasome regulatory subunit 8 homolog.